An 892-amino-acid polypeptide reads, in one-letter code: Alanine--tRNA ligase (892 aa).

Histidine 594, histidine 598, cysteine 702, and histidine 706 together coordinate Zn(2+).

The protein belongs to the class-II aminoacyl-tRNA synthetase family. Zn(2+) is required as a cofactor.

Its subcellular location is the cytoplasm. The enzyme catalyses tRNA(Ala) + L-alanine + ATP = L-alanyl-tRNA(Ala) + AMP + diphosphate. In terms of biological role, catalyzes the attachment of alanine to tRNA(Ala) in a two-step reaction: alanine is first activated by ATP to form Ala-AMP and then transferred to the acceptor end of tRNA(Ala). Also edits incorrectly charged Ser-tRNA(Ala) and Gly-tRNA(Ala) via its editing domain. The polypeptide is Alanine--tRNA ligase (Pyrobaculum neutrophilum (strain DSM 2338 / JCM 9278 / NBRC 100436 / V24Sta) (Thermoproteus neutrophilus)).